An 80-amino-acid polypeptide reads, in one-letter code: Small ribosomal subunit protein bS18 (80 aa).

It belongs to the bacterial ribosomal protein bS18 family. Part of the 30S ribosomal subunit. Forms a tight heterodimer with protein bS6.

In terms of biological role, binds as a heterodimer with protein bS6 to the central domain of the 16S rRNA, where it helps stabilize the platform of the 30S subunit. The protein is Small ribosomal subunit protein bS18 of Staphylococcus aureus (strain Mu3 / ATCC 700698).